Reading from the N-terminus, the 306-residue chain is MNKQLKEFQEYLPKCRKIIALVGAGLSASSGLPTFRGSQGLWKNFNMIDLATPDAFYIDPGLVWQFYSWRRYGALRAKPNKGHYALSKLSHKFNSDEYITITQNVDGLSSRSGHNLDSLYEIHGSLFDLKCTSFMCNYVDHNNFKQPLTKALEDTEFEYSNLSTRKRTFGDSDGNDGVDISLSPQFNPVKTISEKDLPSCPVCHDLLRPGVVWFGESLPLNLITEIDSFVESDPSVDLILVIGTSGTVYPANSYVERVRLKGGKVAIFNTDIEDNILNGKVEDTWGFKGDAAELLPIALKPLIGDI.

Residues 1-305 (MNKQLKEFQE…PIALKPLIGD (305 aa)) enclose the Deacetylase sirtuin-type domain. Residue 23 to 42 (GAGLSASSGLPTFRGSQGLW) participates in NAD(+) binding. Positions 67 and 70 each coordinate substrate. 103-106 (QNVD) contributes to the NAD(+) binding site. H123 serves as the catalytic Proton acceptor. Positions 131, 136, 200, and 203 each coordinate Zn(2+). Residues 243–245 (GTS), 269–271 (NTD), and A291 each bind NAD(+).

It belongs to the sirtuin family. Class III subfamily. Zn(2+) is required as a cofactor.

It localises to the mitochondrion. The catalysed reaction is N(6)-malonyl-L-lysyl-[protein] + NAD(+) + H2O = 2''-O-malonyl-ADP-D-ribose + nicotinamide + L-lysyl-[protein]. The enzyme catalyses N(6)-succinyl-L-lysyl-[protein] + NAD(+) + H2O = 2''-O-succinyl-ADP-D-ribose + nicotinamide + L-lysyl-[protein]. It carries out the reaction N(6)-glutaryl-L-lysyl-[protein] + NAD(+) + H2O = 2''-O-glutaryl-ADP-D-ribose + nicotinamide + L-lysyl-[protein]. Its function is as follows. NAD-dependent lysine demalonylase, desuccinylase and deglutarylase that specifically removes malonyl, succinyl and glutaryl groups on target proteins. Has weak NAD-dependent protein deacetylase activity; however this activity may not be physiologically relevant in vivo. The polypeptide is NAD-dependent protein deacylase (Candida albicans (strain SC5314 / ATCC MYA-2876) (Yeast)).